Consider the following 144-residue polypeptide: uncharacterized protein (144 aa).

This is an uncharacterized protein from Escherichia coli O157:H7.